The following is a 467-amino-acid chain: Asparagine--tRNA ligase (467 aa).

This sequence belongs to the class-II aminoacyl-tRNA synthetase family. In terms of assembly, homodimer.

It is found in the cytoplasm. The catalysed reaction is tRNA(Asn) + L-asparagine + ATP = L-asparaginyl-tRNA(Asn) + AMP + diphosphate + H(+). This chain is Asparagine--tRNA ligase, found in Glaesserella parasuis serovar 5 (strain SH0165) (Haemophilus parasuis).